The sequence spans 203 residues: Protein GrpE (203 aa).

It belongs to the GrpE family. In terms of assembly, homodimer.

Its subcellular location is the cytoplasm. Functionally, participates actively in the response to hyperosmotic and heat shock by preventing the aggregation of stress-denatured proteins, in association with DnaK and GrpE. It is the nucleotide exchange factor for DnaK and may function as a thermosensor. Unfolded proteins bind initially to DnaJ; upon interaction with the DnaJ-bound protein, DnaK hydrolyzes its bound ATP, resulting in the formation of a stable complex. GrpE releases ADP from DnaK; ATP binding to DnaK triggers the release of the substrate protein, thus completing the reaction cycle. Several rounds of ATP-dependent interactions between DnaJ, DnaK and GrpE are required for fully efficient folding. This Pseudoalteromonas translucida (strain TAC 125) protein is Protein GrpE.